The sequence spans 390 residues: Homoserine O-succinyltransferase (390 aa).

An AB hydrolase-1 domain is found at 59 to 369; it reads NAVLVCHALN…PHGHDAFLLD (311 aa). Catalysis depends on S165, which acts as the Nucleophile. R235 lines the substrate pocket. Catalysis depends on residues D330 and H363. D364 contacts substrate.

Belongs to the AB hydrolase superfamily. MetX family. In terms of assembly, homodimer.

The protein resides in the cytoplasm. The catalysed reaction is L-homoserine + succinyl-CoA = O-succinyl-L-homoserine + CoA. The protein operates within amino-acid biosynthesis; L-methionine biosynthesis via de novo pathway; O-succinyl-L-homoserine from L-homoserine: step 1/1. In terms of biological role, transfers a succinyl group from succinyl-CoA to L-homoserine, forming succinyl-L-homoserine. This Cupriavidus pinatubonensis (strain JMP 134 / LMG 1197) (Cupriavidus necator (strain JMP 134)) protein is Homoserine O-succinyltransferase.